Here is a 168-residue protein sequence, read N- to C-terminus: Photosystem I assembly protein Ycf3 (168 aa).

3 TPR repeats span residues 35 to 68 (AFTY…EIDP), 72 to 105 (SYIL…NPFL), and 120 to 153 (GEQA…TPGN).

The protein belongs to the Ycf3 family.

The protein localises to the plastid. It localises to the chloroplast thylakoid membrane. Essential for the assembly of the photosystem I (PSI) complex. May act as a chaperone-like factor to guide the assembly of the PSI subunits. The polypeptide is Photosystem I assembly protein Ycf3 (Helianthus annuus (Common sunflower)).